The primary structure comprises 133 residues: Large ribosomal subunit protein uL15 (133 aa).

Positions 1 to 57 are disordered; it reads MALEKLTPAAGSTHATKRIGRGQGSGNGKTAGKGNKGQRARKGYNEKRGFEGGQQPL. Over residues 21–35 the composition is skewed to gly residues; that stretch reads RGQGSGNGKTAGKGN.

Belongs to the universal ribosomal protein uL15 family. In terms of assembly, part of the 50S ribosomal subunit.

Its function is as follows. Binds to the 23S rRNA. In Campylobacter concisus (strain 13826), this protein is Large ribosomal subunit protein uL15.